The following is a 402-amino-acid chain: L-threonine ammonia-lyase (402 aa).

An N6-(pyridoxal phosphate)lysine modification is found at Lys-51. Pyridoxal 5'-phosphate is bound by residues Asn-78, Gly-178–Leu-181, and Ser-302. The ACT domain maps to Lys-327 to Lys-402.

Belongs to the serine/threonine dehydratase family. The cofactor is pyridoxal 5'-phosphate.

It catalyses the reaction L-threonine = 2-oxobutanoate + NH4(+). It carries out the reaction L-serine = pyruvate + NH4(+). It functions in the pathway amino-acid biosynthesis; L-isoleucine biosynthesis; 2-oxobutanoate from L-threonine: step 1/1. Catalyzes the conversion of threonine to 2-oxobutanoate and ammonia. Functions in the threonine-dependent pathway of isoleucine biosynthesis, which is the minor pathway for isoleucine biosynthesis in G.sulfurreducens. Also displays serine ammonia-lyase activity, yielding pyruvate from L-serine. The sequence is that of L-threonine ammonia-lyase from Geobacter sulfurreducens (strain ATCC 51573 / DSM 12127 / PCA).